The chain runs to 63 residues: MKAQDLREKSVEELNSELLNLLKEQFNLRMQAATGQLQQTHTLKAVRRDIARVKTVLTEKAGA.

The protein belongs to the universal ribosomal protein uL29 family.

The sequence is that of Large ribosomal subunit protein uL29 from Vibrio cholerae serotype O1 (strain ATCC 39541 / Classical Ogawa 395 / O395).